Reading from the N-terminus, the 863-residue chain is Nitrate reductase [NADH] (863 aa).

Residue Cys137 participates in Mo-molybdopterin binding. Residues 484–559 (KKYVTKAMLE…LEQFYIAELA (76 aa)) enclose the Cytochrome b5 heme-binding domain. Heme is bound by residues His519 and His542. One can recognise an FAD-binding FR-type domain in the interval 602 to 719 (KKQKAAELKE…KGPIGHFHYD (118 aa)). FAD is bound by residues 659–662 (RAYT), 676–680 (VVKIY), Phe688, 693–695 (KFS), and Thr746.

It belongs to the nitrate reductase family. As to quaternary structure, homodimer. The cofactor is FAD. Requires Mo-molybdopterin as cofactor. It depends on heme as a cofactor.

The catalysed reaction is nitrite + NAD(+) + H2O = nitrate + NADH + H(+). In terms of biological role, nitrate reductase is a key enzyme involved in the first step of nitrate assimilation in plants, fungi and bacteria. The sequence is that of Nitrate reductase [NADH] from Ulva prolifera (Green seaweed).